Here is a 1024-residue protein sequence, read N- to C-terminus: Beta-galactosidase (1024 aa).

Substrate-binding residues include N103 and D202. Na(+) is bound at residue D202. Residues E417, H419, and E462 each coordinate Mg(2+). Substrate contacts are provided by residues E462 and 538–541 (EYAH). E462 acts as the Proton donor in catalysis. The active-site Nucleophile is the E538. Residue N598 participates in Mg(2+) binding. Na(+)-binding residues include F602 and N605. The substrate site is built by N605 and W1000.

Belongs to the glycosyl hydrolase 2 family. In terms of assembly, homotetramer. Mg(2+) is required as a cofactor. It depends on Na(+) as a cofactor.

The catalysed reaction is Hydrolysis of terminal non-reducing beta-D-galactose residues in beta-D-galactosides.. The protein is Beta-galactosidase of Escherichia coli (strain SMS-3-5 / SECEC).